A 1527-amino-acid chain; its full sequence is DNA (cytosine-5)-methyltransferase 1A (1527 aa).

2 disordered regions span residues 1–62 and 661–718; these read MAKS…PKRA and GDTK…KEIK. Composition is skewed to acidic residues over residues 25–36 and 664–692; these read EPVENENLESEF and KEEDQNEPKEIDDDQEENEDNDAEEEVNV. Residues 709–718 show a composition bias toward basic and acidic residues; that stretch reads SSADTRKEIK. BAH domains lie at 742 to 874 and 910 to 1049; these read LSIS…FSLP and ITYN…KQLP. The region spanning 1092–1526 is the SAM-dependent MTase C5-type domain; sequence LATLDIFAGC…RKLKQAIDAK (435 aa). The active site involves C1197.

Belongs to the class I-like SAM-binding methyltransferase superfamily. C5-methyltransferase family. Expressed in roots and inflorescences. Expressed in roots, panicles, anthers, pistils, endosperm and imbibed embryos. Expressed in tissues containing actively replicating and dividing cells, such as shoot and root meristems.

The protein localises to the nucleus. It carries out the reaction a 2'-deoxycytidine in DNA + S-adenosyl-L-methionine = a 5-methyl-2'-deoxycytidine in DNA + S-adenosyl-L-homocysteine + H(+). In terms of biological role, probably methylates CpG residues and maintains DNA methylation. May be involved in methylation-dependent gene silencing. May play a minor role in the maintenance of DNA methylation. This Oryza sativa subsp. japonica (Rice) protein is DNA (cytosine-5)-methyltransferase 1A.